Reading from the N-terminus, the 112-residue chain is Mitochondrial import inner membrane translocase subunit TIM14-2 (112 aa).

The helical transmembrane segment at 7 to 25 (AGAAVAAAAYAGKYGIEAW) threads the bilayer. The J domain occupies 53–112 (EAALILGVRESVAAEKVKEAHRRVMVANHPDAGGSHYLASKINEAKDMMLGKTKNSGSAF).

It belongs to the TIM14 family. In terms of assembly, probable component of the PAM complex at least composed of a mitochondrial HSP70 protein, TIMM44 and TIMM14. The complex interacts with the TIMM23 component of the TIM17:23 complex.

It is found in the mitochondrion. Its subcellular location is the mitochondrion inner membrane. Its function is as follows. Component of the PAM complex, a complex required for the translocation of transit peptide-containing proteins from the inner membrane into the mitochondrial matrix in an ATP-dependent manner. The protein is Mitochondrial import inner membrane translocase subunit TIM14-2 (TIM14-2) of Arabidopsis thaliana (Mouse-ear cress).